Here is a 423-residue protein sequence, read N- to C-terminus: Histidine--tRNA ligase (423 aa).

This sequence belongs to the class-II aminoacyl-tRNA synthetase family. As to quaternary structure, homodimer.

Its subcellular location is the cytoplasm. The catalysed reaction is tRNA(His) + L-histidine + ATP = L-histidyl-tRNA(His) + AMP + diphosphate + H(+). This is Histidine--tRNA ligase from Bacillus cytotoxicus (strain DSM 22905 / CIP 110041 / 391-98 / NVH 391-98).